Here is a 65-residue protein sequence, read N- to C-terminus: Metallothionein-like protein 3B (65 aa).

Belongs to the metallothionein superfamily. Type 15 family.

Metallothioneins have a high content of cysteine residues that bind various heavy metals. This is Metallothionein-like protein 3B (MT3B) from Oryza sativa subsp. indica (Rice).